We begin with the raw amino-acid sequence, 177 residues long: Ribosome maturation factor RimM (177 aa).

The region spanning 100 to 177 (EDEYYWSDLV…TVLVAWPSDY (78 aa)) is the PRC barrel domain.

This sequence belongs to the RimM family. In terms of assembly, binds ribosomal protein uS19.

The protein localises to the cytoplasm. In terms of biological role, an accessory protein needed during the final step in the assembly of 30S ribosomal subunit, possibly for assembly of the head region. Essential for efficient processing of 16S rRNA. May be needed both before and after RbfA during the maturation of 16S rRNA. It has affinity for free ribosomal 30S subunits but not for 70S ribosomes. The sequence is that of Ribosome maturation factor RimM from Psychrobacter cryohalolentis (strain ATCC BAA-1226 / DSM 17306 / VKM B-2378 / K5).